A 266-amino-acid chain; its full sequence is MTCIFIKNINEINKMRLVGKLVADVLDMIKEYIVPGITTEELNNICHNYITYKQHAKPACLGYQGFPKSICTSINDIVCHGIPNKNSILKNGDIINIDVAILKDKYYSDASKMFFVGKPTELGKKLCYVAKKSLYLALYTIRPGINLQKLGKVIQNYVKKQNFSIVKEYCGHGIGRSFHEPPQILHHNYYKSNTTILQSGMTFTVEPMINSGSCEVQCTNDGWTVKTKDKSLSAQYEHTILVNEEGCEILTLQKGEQISRILKNLT.

Substrate is bound at residue H80. Positions 98, 109, and 172 each coordinate a divalent metal cation. H179 provides a ligand contact to substrate. Positions 206 and 237 each coordinate a divalent metal cation.

Belongs to the peptidase M24A family. Methionine aminopeptidase type 1 subfamily. In terms of assembly, monomer. The cofactor is Co(2+). Zn(2+) serves as cofactor. Requires Mn(2+) as cofactor. Fe(2+) is required as a cofactor.

The enzyme catalyses Release of N-terminal amino acids, preferentially methionine, from peptides and arylamides.. Its function is as follows. Removes the N-terminal methionine from nascent proteins. The N-terminal methionine is often cleaved when the second residue in the primary sequence is small and uncharged (Met-Ala-, Cys, Gly, Pro, Ser, Thr, or Val). Requires deformylation of the N(alpha)-formylated initiator methionine before it can be hydrolyzed. The protein is Methionine aminopeptidase of Buchnera aphidicola subsp. Baizongia pistaciae (strain Bp).